Here is a 167-residue protein sequence, read N- to C-terminus: MKFKFNKNGNNNFLAKAKVAIIVGYFYQDIGDKLLSAAQETLAKYGINANNINVFYVPGAFEIPLLAKKLASQKLSNKNLYDGIVALGAIINGETPHFEFVCNECARGVSDVSYQYEIPTAFGILTTNNMEQTIGRAGGYKGNKGEKATMAMIEMLYLMQQVDTQTF.

5-amino-6-(D-ribitylamino)uracil-binding positions include Phe26, 60–62 (AFE), and 89–91 (AII). 94 to 95 (ET) lines the (2S)-2-hydroxy-3-oxobutyl phosphate pocket. His97 acts as the Proton donor in catalysis. Phe122 contributes to the 5-amino-6-(D-ribitylamino)uracil binding site. A (2S)-2-hydroxy-3-oxobutyl phosphate-binding site is contributed by Arg136.

Belongs to the DMRL synthase family. As to quaternary structure, forms an icosahedral capsid composed of 60 subunits, arranged as a dodecamer of pentamers.

It carries out the reaction (2S)-2-hydroxy-3-oxobutyl phosphate + 5-amino-6-(D-ribitylamino)uracil = 6,7-dimethyl-8-(1-D-ribityl)lumazine + phosphate + 2 H2O + H(+). The protein operates within cofactor biosynthesis; riboflavin biosynthesis; riboflavin from 2-hydroxy-3-oxobutyl phosphate and 5-amino-6-(D-ribitylamino)uracil: step 1/2. Catalyzes the formation of 6,7-dimethyl-8-ribityllumazine by condensation of 5-amino-6-(D-ribitylamino)uracil with 3,4-dihydroxy-2-butanone 4-phosphate. This is the penultimate step in the biosynthesis of riboflavin. This Ruthia magnifica subsp. Calyptogena magnifica protein is 6,7-dimethyl-8-ribityllumazine synthase.